The primary structure comprises 90 residues: Conotoxin Im6.2 (90 aa).

Positions 1–18 are cleaved as a signal peptide; the sequence is MKLTILLLVAALLVLTQA. A propeptide spanning residues 19–29 is cleaved from the precursor; the sequence is RTERRRVKSRK. 3 cysteine pairs are disulfide-bonded: Cys61/Cys75, Cys68/Cys79, and Cys74/Cys84. Glu89 carries the post-translational modification Glutamic acid 1-amide.

This sequence belongs to the conotoxin O2 superfamily. In terms of tissue distribution, expressed by the venom duct.

It localises to the secreted. Functionally, probable neurotoxin. This Conus imperialis (Imperial cone) protein is Conotoxin Im6.2.